We begin with the raw amino-acid sequence, 103 residues long: Large ribosomal subunit protein uL23 (103 aa).

This sequence belongs to the universal ribosomal protein uL23 family. Part of the 50S ribosomal subunit. Contacts protein L29, and trigger factor when it is bound to the ribosome.

In terms of biological role, one of the early assembly proteins it binds 23S rRNA. One of the proteins that surrounds the polypeptide exit tunnel on the outside of the ribosome. Forms the main docking site for trigger factor binding to the ribosome. The protein is Large ribosomal subunit protein uL23 of Pelodictyon phaeoclathratiforme (strain DSM 5477 / BU-1).